Here is a 138-residue protein sequence, read N- to C-terminus: Basic phospholipase A2 homolog G6K49 (138 aa).

The signal sequence occupies residues 1-16 (MRTLWIMAVLLLGVEG). 7 cysteine pairs are disulfide-bonded: C42-C132, C44-C60, C59-C112, C65-C138, C66-C105, C73-C98, and C91-C103. The important for membrane-damaging activities in eukaryotes and bacteria; heparin-binding stretch occupies residues 122 to 133 (KKHRVTVKFLCK).

Belongs to the phospholipase A2 family. Group II subfamily. K49 sub-subfamily. Homodimer; non-covalently linked. As to expression, expressed by the venom gland.

Its subcellular location is the secreted. Functionally, snake venom phospholipase A2 (PLA2) that lacks enzymatic activity. Displays myotoxic activities. A model of myotoxic mechanism has been proposed: an apo Lys49-PLA2 is activated by the entrance of a hydrophobic molecule (e.g. fatty acid) at the hydrophobic channel of the protein leading to a reorientation of a monomer. This reorientation causes a transition between 'inactive' to 'active' states, causing alignment of C-terminal and membrane-docking sites (MDoS) side-by-side and putting the membrane-disruption sites (MDiS) in the same plane, exposed to solvent and in a symmetric position for both monomers. The MDoS region stabilizes the toxin on membrane by the interaction of charged residues with phospholipid head groups. Subsequently, the MDiS region destabilizes the membrane with penetration of hydrophobic residues. This insertion causes a disorganization of the membrane, allowing an uncontrolled influx of ions (i.e. calcium and sodium), and eventually triggering irreversible intracellular alterations and cell death. The sequence is that of Basic phospholipase A2 homolog G6K49 from Calloselasma rhodostoma (Malayan pit viper).